The chain runs to 180 residues: Fanconi anemia core complex-associated protein 20 (180 aa).

Basic residues predominate over residues 1 to 17 (MEAARRPRLGLSRRRPR). Disordered regions lie at residues 1–28 (MEAA…GRPW) and 106–135 (GAGG…VEQQ). Phosphoserine is present on residues S113 and S137. The segment at 144 to 180 (LRSCPMCQKEFAPRLTQLDVDSHLAQCLAESTEDVTW) adopts a UBZ2-type zinc-finger fold. 4 residues coordinate Zn(2+): C147, C150, H166, and C170.

Component of the Fanconi anemia (FA) complex. Interacts with FANCA; interaction is direct. Interacts with REV1. Reported to bind monoubiquitinated REV1; however it binds better to non-ubiquitinated REV1.

The protein localises to the nucleus. Its subcellular location is the chromosome. Functionally, component of the Fanconi anemia (FA) complex required to recruit the FA complex to DNA interstrand cross-links (ICLs) and promote ICLs repair. Following DNA damage recognizes and binds 'Lys-63'-linked ubiquitin generated by RNF8 at ICLs and recruits other components of the FA complex. Promotes translesion synthesis via interaction with REV1. In Homo sapiens (Human), this protein is Fanconi anemia core complex-associated protein 20.